Consider the following 107-residue polypeptide: Putative double-stranded DNA mimic protein HS_0995 (107 aa).

This sequence belongs to the putative dsDNA mimic protein family.

In terms of biological role, may act as a double-stranded DNA (dsDNA) mimic. Probably regulates the activity of a dsDNA-binding protein. The sequence is that of Putative double-stranded DNA mimic protein HS_0995 from Histophilus somni (strain 129Pt) (Haemophilus somnus).